The chain runs to 552 residues: Protoheme IX farnesyltransferase, mitochondrial (552 aa).

Residues 118–185 form a disordered region; that stretch reads AADIPPSTST…PSGEIPPDAS (68 aa). A compositionally biased stretch (low complexity) spans 150–168; sequence EQAASASSNAPSEAAQTTP. 8 helical membrane-spanning segments follow: residues 215-235, 245-267, 296-316, 318-338, 346-366, 387-407, 441-461, and 487-507; these read LTML…VPDF, LSPL…ANAL, AAVC…QFGV, PTVA…YTPL, TWVG…AAAG, AGGW…FMAL, VFVP…SFAV, and ARGL…LALL.

The protein belongs to the UbiA prenyltransferase family.

The protein localises to the mitochondrion membrane. It carries out the reaction heme b + (2E,6E)-farnesyl diphosphate + H2O = Fe(II)-heme o + diphosphate. Its function is as follows. Converts protoheme IX and farnesyl diphosphate to heme O. This Pyricularia oryzae (strain 70-15 / ATCC MYA-4617 / FGSC 8958) (Rice blast fungus) protein is Protoheme IX farnesyltransferase, mitochondrial (COX10).